The sequence spans 238 residues: Small ribosomal subunit protein eS4 (238 aa).

Positions 38–110 (LPLAIIIRDV…EKKYYALIPI (73 aa)) constitute an S4 RNA-binding domain.

This sequence belongs to the eukaryotic ribosomal protein eS4 family.

In Pyrobaculum islandicum (strain DSM 4184 / JCM 9189 / GEO3), this protein is Small ribosomal subunit protein eS4.